The primary structure comprises 178 residues: Ribosome maturation factor RimP (178 aa).

Belongs to the RimP family.

It localises to the cytoplasm. Its function is as follows. Required for maturation of 30S ribosomal subunits. This chain is Ribosome maturation factor RimP, found in Streptococcus pyogenes serotype M3 (strain ATCC BAA-595 / MGAS315).